Consider the following 35-residue polypeptide: Photosystem II reaction center protein M (35 aa).

At M1 the chain carries N-formylmethionine. A helical membrane pass occupies residues 7–28; that stretch reads GFIASILFVLVPTVFLLILFIQ.

This sequence belongs to the PsbM family. PSII is composed of 1 copy each of membrane proteins PsbA, PsbB, PsbC, PsbD, PsbE, PsbF, PsbH, PsbI, PsbJ, PsbK, PsbL, PsbM, PsbT, PsbX, PsbY, PsbZ, Psb30/Ycf12, peripheral proteins PsbO, CyanoQ (PsbQ), PsbU, PsbV and a large number of cofactors. It forms dimeric complexes.

It localises to the cellular thylakoid membrane. In terms of biological role, one of the components of the core complex of photosystem II (PSII). PSII is a light-driven water:plastoquinone oxidoreductase that uses light energy to abstract electrons from H(2)O, generating O(2) and a proton gradient subsequently used for ATP formation. It consists of a core antenna complex that captures photons, and an electron transfer chain that converts photonic excitation into a charge separation. This subunit is found at the monomer-monomer interface. Involved in assembly of monomeric PSII from the CP43-less intermediate. In Synechocystis sp. (strain ATCC 27184 / PCC 6803 / Kazusa), this protein is Photosystem II reaction center protein M.